Here is a 123-residue protein sequence, read N- to C-terminus: Ragulator complex protein LAMTOR3-B (123 aa).

The protein belongs to the LAMTOR3 family. In terms of assembly, part of the Ragulator complex composed of lamtor1, lamtor2, lamtor3, lamtor4 and lamtor5. The Ragulator complex interacts with slc38a9; the probable amino acid sensor. Component of the lysosomal folliculin complex (LFC).

The protein localises to the late endosome membrane. Functionally, as part of the Ragulator complex it is involved in amino acid sensing and activation of mTORC1, a signaling complex promoting cell growth in response to growth factors, energy levels, and amino acids. Activated by amino acids through a mechanism involving the lysosomal V-ATPase, the Ragulator plays a dual role for the small GTPases Rag (RagA/RRAGA, RagB/RRAGB, RagC/RRAGC and/or RagD/RRAGD): it (1) acts as a guanine nucleotide exchange factor (GEF), activating the small GTPases Rag and (2) mediates recruitment of Rag GTPases to the lysosome membrane. Activated Ragulator and Rag GTPases function as a scaffold recruiting mTORC1 to lysosomes where it is in turn activated. The sequence is that of Ragulator complex protein LAMTOR3-B (lamtor3-b) from Xenopus laevis (African clawed frog).